The chain runs to 134 residues: Small ribosomal subunit protein uS11 (134 aa).

This sequence belongs to the universal ribosomal protein uS11 family. As to quaternary structure, part of the 30S ribosomal subunit. Interacts with proteins S7 and S18. Binds to IF-3.

Located on the platform of the 30S subunit, it bridges several disparate RNA helices of the 16S rRNA. Forms part of the Shine-Dalgarno cleft in the 70S ribosome. This chain is Small ribosomal subunit protein uS11, found in Frankia alni (strain DSM 45986 / CECT 9034 / ACN14a).